Consider the following 201-residue polypeptide: Adenylyl-sulfate kinase (201 aa).

ATP is bound at residue 35-42 (GLSGSGKS). The active-site Phosphoserine intermediate is S109.

The protein belongs to the APS kinase family.

It catalyses the reaction adenosine 5'-phosphosulfate + ATP = 3'-phosphoadenylyl sulfate + ADP + H(+). The protein operates within sulfur metabolism; hydrogen sulfide biosynthesis; sulfite from sulfate: step 2/3. In terms of biological role, catalyzes the synthesis of activated sulfate. The protein is Adenylyl-sulfate kinase of Shigella boydii serotype 18 (strain CDC 3083-94 / BS512).